Consider the following 582-residue polypeptide: Solute carrier family 15 member 3 (582 aa).

The tract at residues 1–20 (MSALRAEQQPSRSGERQPLV) is disordered. The next 4 helical transmembrane spans lie at 33–53 (TAAA…FGVT), 77–97 (LLFL…ADVY), 102–122 (LAIS…LTTI), and 155–175 (PYCA…ASSV). Residue Asn178 is glycosylated (N-linked (GlcNAc...) asparagine). Residues 201–221 (WFYWSINLGAILSLLVVAFIE) traverse the membrane as a helical segment. Asn223 carries N-linked (GlcNAc...) asparagine glycosylation. Helical transmembrane passes span 232-252 (IIVG…PVFI) and 312-332 (FQVL…WMVY). Asn357 is a glycosylation site (N-linked (GlcNAc...) asparagine). 2 consecutive transmembrane segments (helical) span residues 371–391 (IPEA…VPVK) and 409–429 (LQKM…AGVL). Asn440 carries N-linked (GlcNAc...) asparagine glycosylation. The next 3 helical transmembrane spans lie at 466-485 (YLLI…EFAY), 498-518 (GIFF…VALL), and 541-561 (LYFF…LWIA). The N-linked (GlcNAc...) asparagine glycan is linked to Asn575.

Belongs to the major facilitator superfamily. Proton-dependent oligopeptide transporter (POT/PTR) (TC 2.A.17) family. As to expression, abundant expression in lung, spleen and thymus, and detected faintly in brain, liver, adrenal gland and heart at protein level.

The protein localises to the lysosome membrane. It localises to the endosome membrane. It catalyses the reaction N-acetyl-D-muramoyl-L-alanyl-D-isoglutamine(out) + n H(+)(out) = N-acetyl-D-muramoyl-L-alanyl-D-isoglutamine(in) + n H(+)(in). The enzyme catalyses glycylglycylglycine(out) + n H(+)(out) = glycylglycylglycine(in) + n H(+)(in). The catalysed reaction is carnosine(out) + n H(+)(out) = carnosine(in) + n H(+)(in). It carries out the reaction L-histidine(out) + n H(+)(out) = L-histidine(in) + n H(+)(in). Functionally, proton-coupled amino-acid transporter that transports free histidine and certain di- and tripeptides, and is involved in innate immune response. Also able to transport carnosine. Involved in the detection of microbial pathogens by toll-like receptors (TLRs) and NOD-like receptors (NLRs), probably by mediating transport of bacterial peptidoglycans across the endolysosomal membrane: catalyzes the transport of certain bacterial peptidoglycans, such as muramyl dipeptide (MDP), the NOD2 ligand. This chain is Solute carrier family 15 member 3 (Slc15a3), found in Rattus norvegicus (Rat).